A 319-amino-acid polypeptide reads, in one-letter code: Acetyl-coenzyme A carboxylase carboxyl transferase subunit alpha (319 aa).

The region spanning 35-296 (DLEKEIKQLE…KQRLLEQLKE (262 aa)) is the CoA carboxyltransferase C-terminal domain.

This sequence belongs to the AccA family. As to quaternary structure, acetyl-CoA carboxylase is a heterohexamer composed of biotin carboxyl carrier protein (AccB), biotin carboxylase (AccC) and two subunits each of ACCase subunit alpha (AccA) and ACCase subunit beta (AccD).

It is found in the cytoplasm. It carries out the reaction N(6)-carboxybiotinyl-L-lysyl-[protein] + acetyl-CoA = N(6)-biotinyl-L-lysyl-[protein] + malonyl-CoA. It functions in the pathway lipid metabolism; malonyl-CoA biosynthesis; malonyl-CoA from acetyl-CoA: step 1/1. Component of the acetyl coenzyme A carboxylase (ACC) complex. First, biotin carboxylase catalyzes the carboxylation of biotin on its carrier protein (BCCP) and then the CO(2) group is transferred by the carboxyltransferase to acetyl-CoA to form malonyl-CoA. In Aliivibrio fischeri (strain ATCC 700601 / ES114) (Vibrio fischeri), this protein is Acetyl-coenzyme A carboxylase carboxyl transferase subunit alpha.